The chain runs to 104 residues: L-rhamnose mutarotase (104 aa).

Position 18 (Tyr18) interacts with substrate. His22 (proton donor) is an active-site residue. Residues Tyr41 and 76-77 (WW) contribute to the substrate site.

This sequence belongs to the rhamnose mutarotase family. Homodimer.

Its subcellular location is the cytoplasm. It catalyses the reaction alpha-L-rhamnose = beta-L-rhamnose. Its pathway is carbohydrate metabolism; L-rhamnose metabolism. Its function is as follows. Involved in the anomeric conversion of L-rhamnose. In Salmonella newport (strain SL254), this protein is L-rhamnose mutarotase.